The following is a 53-amino-acid chain: Natriuretic peptide DNP-2 (53 aa).

C7 and C23 form a disulfide bridge. The propeptide occupies 39–53 (IIRDLHPDSKQSQAA).

This sequence belongs to the natriuretic peptide family. In terms of tissue distribution, expressed by the venom gland.

It is found in the secreted. Functionally, exhibits vasodilator, natriuretic and diuretic properties in animal models and human tissues. Acts by stimulating cGMP via the natriuretic peptide receptor 1 (NPR1). Is a poor agonist of the atrial natriuretic peptide receptor 2 (NPR2). Is not degraded by neutral endopeptidase (NEP/MME). Binds to atrial natriuretic peptide clearance receptor (NPR-C/NPR3), which may be responsible of the removal of DNP from the circulation. Increases calcium uptake and induces histamine release from rat peritoneal mast cells. Increases calcium-activated potassium (KCa) current in gastric antral circular smooth muscle cells by increasing cGMP production and activating inositol trisphosphate receptors (IP3Rs). In vivo, reduces both systolic and diastolic blood pressure with no effect on heart rate, when intravenously injected in conscious rabbits. The chain is Natriuretic peptide DNP-2 from Dendroaspis angusticeps (Eastern green mamba).